The following is a 328-amino-acid chain: Peroxidase 71 (328 aa).

Residues 1–23 (MGLVRSLCLLITFLNCLIISVHG) form the signal peptide. 4 disulfides stabilise this stretch: cysteine 44/cysteine 120, cysteine 77/cysteine 82, cysteine 126/cysteine 324, and cysteine 204/cysteine 235. The active-site Proton acceptor is histidine 75. Aspartate 76, valine 79, glycine 81, aspartate 83, and serine 85 together coordinate Ca(2+). Proline 167 contacts substrate. Heme b is bound at residue histidine 197. Threonine 198 is a binding site for Ca(2+). The N-linked (GlcNAc...) asparagine glycan is linked to asparagine 213. Positions 248, 251, and 256 each coordinate Ca(2+). N-linked (GlcNAc...) asparagine glycosylation occurs at asparagine 262.

This sequence belongs to the peroxidase family. Classical plant (class III) peroxidase subfamily. Requires heme b as cofactor. Ca(2+) serves as cofactor. Slightly expressed in roots.

The protein resides in the secreted. The catalysed reaction is 2 a phenolic donor + H2O2 = 2 a phenolic radical donor + 2 H2O. Removal of H(2)O(2), oxidation of toxic reductants, biosynthesis and degradation of lignin, suberization, auxin catabolism, response to environmental stresses such as wounding, pathogen attack and oxidative stress. These functions might be dependent on each isozyme/isoform in each plant tissue. The polypeptide is Peroxidase 71 (PER71) (Arabidopsis thaliana (Mouse-ear cress)).